Consider the following 92-residue polypeptide: MGRSLKKGVFVADHLLRKIETMNSKNEKRVIKTWSRASTIVPQMIGHTIAVHNGKEHLPVYVTEQMVGQKLGEFVPTRVFKGHAGKDKKGKR.

This sequence belongs to the universal ribosomal protein uS19 family.

Protein S19 forms a complex with S13 that binds strongly to the 16S ribosomal RNA. In Gloeobacter violaceus (strain ATCC 29082 / PCC 7421), this protein is Small ribosomal subunit protein uS19.